The chain runs to 74 residues: Antimicrobial peptide 2 (74 aa).

The N-terminal stretch at 1–22 is a signal peptide; it reads MEIKYLLTVFLVLLIVSDHCQA. A Lysine amide modification is found at Lys-40. Positions 46–74 are excised as a propeptide; sequence DLDGQIDRSRNFRKRDAELEELLSKLPIY.

In terms of tissue distribution, expressed by the venom gland.

The protein localises to the secreted. Its subcellular location is the target cell membrane. Functionally, has antibacterial activity against the Gram-positive bacteria S.aureus (MIC=48 uM), the Gram-negative bacteria E.coli (MIC=120 uM), and the yeast C.albicans (MIC=64 uM). Causes hemolysis on horse erythrocytes. The sequence is that of Antimicrobial peptide 2 from Androctonus amoreuxi (African fattail scorpion).